The primary structure comprises 156 residues: Large ribosomal subunit protein eL24 (156 aa).

Basic and acidic residues predominate over residues 110–129; sequence KESKAKKQETQAAKKAEKAK. Positions 110-156 are disordered; that stretch reads KESKAKKQETQAAKKAEKAKNAANPKARVTSKQGAKGAPVKVAAKSR. Positions 130 to 156 are enriched in low complexity; sequence NAANPKARVTSKQGAKGAPVKVAAKSR.

Belongs to the eukaryotic ribosomal protein eL24 family. In terms of assembly, component of the large ribosomal subunit (LSU). Mature N.crassa ribosomes consist of a small (40S) and a large (60S) subunit. The 40S small subunit contains 1 molecule of ribosomal RNA (18S rRNA) and at least 32 different proteins. The large 60S subunit contains 3 rRNA molecules (26S, 5.8S and 5S rRNA) and at least 42 different proteins.

Its subcellular location is the cytoplasm. Its function is as follows. Component of the ribosome, a large ribonucleoprotein complex responsible for the synthesis of proteins in the cell. The small ribosomal subunit (SSU) binds messenger RNAs (mRNAs) and translates the encoded message by selecting cognate aminoacyl-transfer RNA (tRNA) molecules. The large subunit (LSU) contains the ribosomal catalytic site termed the peptidyl transferase center (PTC), which catalyzes the formation of peptide bonds, thereby polymerizing the amino acids delivered by tRNAs into a polypeptide chain. The nascent polypeptides leave the ribosome through a tunnel in the LSU and interact with protein factors that function in enzymatic processing, targeting, and the membrane insertion of nascent chains at the exit of the ribosomal tunnel. The sequence is that of Large ribosomal subunit protein eL24 (rpl-24) from Neurospora crassa (strain ATCC 24698 / 74-OR23-1A / CBS 708.71 / DSM 1257 / FGSC 987).